We begin with the raw amino-acid sequence, 99 residues long: Nucleoid-associated protein EbfC (99 aa).

The protein belongs to the YbaB/EbfC family. In terms of assembly, homodimer. Can form tetramers and octamers in solution.

The protein localises to the cytoplasm. Its subcellular location is the nucleoid. Binds to DNA and alters its conformation. May be involved in global regulation of gene expression. Binds specifically and non-specifically to DNA, preferentially to the 4 bp broken palindrome 5'-GTnAC-3'. Affects expression of a wide variety of genes, encoding both structural and metabolic proteins. The polypeptide is Nucleoid-associated protein EbfC (Borreliella burgdorferi (strain ATCC 35210 / DSM 4680 / CIP 102532 / B31) (Borrelia burgdorferi)).